A 135-amino-acid chain; its full sequence is Ribosome-binding factor A (135 aa).

The protein belongs to the RbfA family. In terms of assembly, monomer. Binds 30S ribosomal subunits, but not 50S ribosomal subunits or 70S ribosomes.

The protein localises to the cytoplasm. In terms of biological role, one of several proteins that assist in the late maturation steps of the functional core of the 30S ribosomal subunit. Associates with free 30S ribosomal subunits (but not with 30S subunits that are part of 70S ribosomes or polysomes). Required for efficient processing of 16S rRNA. May interact with the 5'-terminal helix region of 16S rRNA. In Bartonella quintana (strain Toulouse) (Rochalimaea quintana), this protein is Ribosome-binding factor A.